Consider the following 89-residue polypeptide: Putative antitoxin VapB42 (89 aa).

Possibly the antitoxin component of a type II toxin-antitoxin (TA) system. Its cognate toxin is VapC42 (Potential). The chain is Putative antitoxin VapB42 (vapB42) from Mycobacterium tuberculosis (strain CDC 1551 / Oshkosh).